Reading from the N-terminus, the 723-residue chain is Transient receptor potential cation channel subfamily V member 5 (723 aa).

The Cytoplasmic portion of the chain corresponds to 1-320 (MGAKTPWIQL…SLKWKKYGQP (320 aa)). ANK repeat units follow at residues 38–68 (IWESPLLRAAKENDMCTLKKLQHDQNCDFRQ), 72–101 (LGETALHVAALYDNLDAAIMLMEAAPYLVT), 110–139 (VGQTALHIAVMNQNVNLVRALLARGASASA), 156–185 (YGEHPLSFAACVGSEEIVRLLIEHGADIRA), 189–222 (LGNTVLHILVLQPNKTFACQMYNLLLSYDGGDHL), and 232–261 (QGLTPFKLAGVEGNTVMFQHLMQKRKRIQW). The chain crosses the membrane as a helical span at residues 321–341 (YFCLLGALYIFYMVCFTTCCV). Over 342-378 (YRPLKFRDANRTHVRDNTIMEQKSLQEAYVTYQDKIR) the chain is Extracellular. A helical membrane pass occupies residues 379 to 401 (LVGELVTVIGAVIILLLEIPDIF). Residues 402-412 (RVGASRYFGQT) lie on the Extracellular side of the membrane. The chain crosses the membrane as a helical span at residues 413–435 (VLGGPFHVIIITYASLVLLTMAM). Topologically, residues 436 to 441 (RLTNVN) are cytoplasmic. The helical transmembrane segment at 442-462 (GEVVPMSMALVLGWCSVMYFA) threads the bilayer. Topologically, residues 463–485 (RGFQMLGPFTIMIQKMIFGDLLR) are extracellular. A helical membrane pass occupies residues 486-506 (FCWLMAMVILGFASAFYIIFQ). The pore-forming intramembrane region spans 517–537 (SDYPTAMFSTFELFLTIIDGP). Position 535 (Asp-535) interacts with Ca(2+). Residues 550-570 (VTYATFAIIATLLMLNLFIAM) form a helical membrane-spanning segment. At 571-723 (MGDTHWRVAQ…EGDGEEIYQF (153 aa)) the chain is on the cytoplasmic side. The segment at 591–595 (VATTV) is interaction with S100A10. Residues 643–646 (AFKS) are involved in Ca(2+)-dependent inactivation. The interval 651-673 (EVQEQLSEKQPSGTETGTLARGS) is disordered. The span at 654-667 (EQLSEKQPSGTETG) shows a compositional bias: polar residues. Thr-678 bears the Phosphothreonine mark. Residue Ser-682 is modified to Phosphoserine. Residues 693 to 723 (RGWEILRRNTLGHLNLGLDPGEGDGEEIYQF) form an involved in Ca(2+)-dependent inactivation region.

This sequence belongs to the transient receptor (TC 1.A.4) family. TrpV subfamily. TRPV5 sub-subfamily. In terms of assembly, homotetramer and probably heterotetramer with TRPV6. Interacts with TRPV6. Interacts with S100A10 and probably with the ANAX2-S100A10 heterotetramer. The interaction with S100A10 is required for the trafficking to the plasma membrane. Interacts with calmodulin. Interacts with BSPRY, which results in its inactivation. Glycosylated. In terms of tissue distribution, detected in kidney cortex (at protein level).

It is found in the apical cell membrane. It catalyses the reaction Ca(2+)(in) = Ca(2+)(out). Its activity is regulated as follows. Activated by WNK3. Functionally, constitutively active calcium selective cation channel thought to be involved in Ca(2+) reabsorption in kidney and intestine. Required for normal Ca(2+) reabsorption in the kidney distal convoluted tubules. The channel is activated by low internal calcium level and the current exhibits an inward rectification. A Ca(2+)-dependent feedback regulation includes fast channel inactivation and slow current decay. Heteromeric assembly with TRPV6 seems to modify channel properties. TRPV5-TRPV6 heteromultimeric concatemers exhibit voltage-dependent gating. The chain is Transient receptor potential cation channel subfamily V member 5 (Trpv5) from Mus musculus (Mouse).